The chain runs to 230 residues: MADLKVGSTTGGSVIWHQGNFPLNPAGDDVLYKSFKIYSEYNKPQATDNDFVSKANGGTKSQGFQKEVEFREGVKISATFSGGSDLNGLYSGNGDGASREKANMDLRSWYGIGIWNTCTGDGSGTHNSGLMPGVVHVETCWRLLFQTDNVISNASGPTGPAHLTRKDYVDGAINTVTANANSRVLRSGDTMTGNLTAPNFFSQNPASQPSHVPRFDQIVIKDSVQDFGYY.

As to quaternary structure, the distal half-fiber contains two molecules each of Gp36 and Gp37 and one molecule of Gp35.

It localises to the virion. Functionally, structural component of the distal-half tail fiber. This is Tail fiber protein p36 (36) from Enterobacteria phage K3 (Bacteriophage K3).